The chain runs to 407 residues: MKRVFLIVLDSFGIGSSPDADKFNDVGSNTFGHIVEKCFLGEANVGRKGVLCIPNLVKLGIINAAKESTGQYPLGFNYSSNVIASYGFASEISSGKDTTSGHWEIAGVPVLDDWYYFKEKQNSFPESLLEKIIIRSELTGFIGNCHASGTDIISRLGEEHIQTKKPIVYTSSDSVFQIACHEEFFGLSNLYKLCKTVRFILDRYNYKVARVIARPFIGNDKLQFQRTGNRRDFSIKPFATTVIKKLIDEKQGQVIAIGKVSDIYGGIGISKNIKSTGLYELCSTTIHEMKKALNNTIVFTNLVDFDSNWGHRRDVSGYAKGLELFDSRLSEIISLVQKNDLLILTADHGCDPTWIGTDHTRENVPVLIYSPGIKKNFLGHRKTFADIGQTIAKYFLLTDMSYGQNML.

Residues Asp10, Asp306, His311, Asp347, His348, and His359 each contribute to the Mn(2+) site.

The protein belongs to the phosphopentomutase family. Mn(2+) is required as a cofactor.

The protein localises to the cytoplasm. The enzyme catalyses 2-deoxy-alpha-D-ribose 1-phosphate = 2-deoxy-D-ribose 5-phosphate. The catalysed reaction is alpha-D-ribose 1-phosphate = D-ribose 5-phosphate. Its pathway is carbohydrate degradation; 2-deoxy-D-ribose 1-phosphate degradation; D-glyceraldehyde 3-phosphate and acetaldehyde from 2-deoxy-alpha-D-ribose 1-phosphate: step 1/2. Its function is as follows. Isomerase that catalyzes the conversion of deoxy-ribose 1-phosphate (dRib-1-P) and ribose 1-phosphate (Rib-1-P) to deoxy-ribose 5-phosphate (dRib-5-P) and ribose 5-phosphate (Rib-5-P), respectively. The chain is Phosphopentomutase from Buchnera aphidicola subsp. Acyrthosiphon pisum (strain APS) (Acyrthosiphon pisum symbiotic bacterium).